We begin with the raw amino-acid sequence, 316 residues long: Ribosomal RNA small subunit methyltransferase H (316 aa).

S-adenosyl-L-methionine is bound by residues 35-37, Asp55, Phe84, Asp105, and Gln112; that span reads AGH.

It belongs to the methyltransferase superfamily. RsmH family.

The protein resides in the cytoplasm. It carries out the reaction cytidine(1402) in 16S rRNA + S-adenosyl-L-methionine = N(4)-methylcytidine(1402) in 16S rRNA + S-adenosyl-L-homocysteine + H(+). Its function is as follows. Specifically methylates the N4 position of cytidine in position 1402 (C1402) of 16S rRNA. In Streptococcus pneumoniae (strain Taiwan19F-14), this protein is Ribosomal RNA small subunit methyltransferase H.